A 456-amino-acid chain; its full sequence is MKISVRNLEPTKVKLTVTVDPEEFNPYLDEARKEIAKQVNVPGFRKGHVPGKIIDQRIGFGAVAGEAVNNGVPELYSKALETKKIHPMAQPEIDVQDVPESAKDETKLKFVATVERRPDIELPALDGMEIEVAKAEVTDEDINNRLEALRQRFGTLVSVDRPAAKGDYANIDLNAEINGETVDSQEGVSYELGSATMLDGLDEALEGLSAGEETSFEGTLEAGKHEGEKALIKVKVNSVKAEELPELDDDFASEASEFDTLDELKEDLKKVAAQDAESRQATAARDAFIAKLEDGLEIPVPKGVKAEMVEQQLKNVTADPSKATKEQKAEAEETVEKELRDQMVLDVLAETMDVKVSQGEVFNFLASIAQQYGMDPNAFIQAIIRNGQIGSAVQEVGRSKGLLSGMRAVTFKSEGETLDLSAFLGEAAEDEESESVEAASAAAAVADSLAADKDAE.

The PPIase FKBP-type domain occupies 166 to 245 (GDYANIDLNA…VNSVKAEELP (80 aa)).

It belongs to the FKBP-type PPIase family. Tig subfamily.

The protein localises to the cytoplasm. It carries out the reaction [protein]-peptidylproline (omega=180) = [protein]-peptidylproline (omega=0). Functionally, involved in protein export. Acts as a chaperone by maintaining the newly synthesized protein in an open conformation. Functions as a peptidyl-prolyl cis-trans isomerase. In Bifidobacterium adolescentis (strain ATCC 15703 / DSM 20083 / NCTC 11814 / E194a), this protein is Trigger factor.